The sequence spans 99 residues: Acylphosphatase (99 aa).

One can recognise an Acylphosphatase-like domain in the interval 5 to 97 (VRQVMIRGRV…RPGERFSQLP (93 aa)). Residues Arg-20 and Asn-38 contribute to the active site.

It belongs to the acylphosphatase family.

The catalysed reaction is an acyl phosphate + H2O = a carboxylate + phosphate + H(+). The protein is Acylphosphatase (acyP) of Nitrobacter winogradskyi (strain ATCC 25391 / DSM 10237 / CIP 104748 / NCIMB 11846 / Nb-255).